The following is a 210-amino-acid chain: Glycerol-3-phosphate acyltransferase 2 (210 aa).

The next 6 membrane-spanning stretches (helical) occupy residues 4 to 24 (LIMV…PAPY), 52 to 72 (VGFW…ALAM), 73 to 93 (AVAN…LMAI), 114 to 134 (IGIL…CFLI), 141 to 161 (FPTL…WLGQ), and 163 to 183 (DMGK…MYIP).

Belongs to the PlsY family. In terms of assembly, probably interacts with PlsX.

It localises to the cell membrane. It carries out the reaction an acyl phosphate + sn-glycerol 3-phosphate = a 1-acyl-sn-glycero-3-phosphate + phosphate. The protein operates within lipid metabolism; phospholipid metabolism. Its function is as follows. Catalyzes the transfer of an acyl group from acyl-phosphate (acyl-PO(4)) to glycerol-3-phosphate (G3P) to form lysophosphatidic acid (LPA). This enzyme utilizes acyl-phosphate as fatty acyl donor, but not acyl-CoA or acyl-ACP. This Dehalococcoides mccartyi (strain CBDB1) protein is Glycerol-3-phosphate acyltransferase 2.